The primary structure comprises 319 residues: ATP-dependent 6-phosphofructokinase (319 aa).

Gly11 lines the ATP pocket. Residue 21-25 (RAVTR) participates in ADP binding. ATP is bound by residues 72-73 (RY) and 102-105 (GDGS). Residue Asp103 coordinates Mg(2+). 125-127 (TID) serves as a coordination point for substrate. Asp127 functions as the Proton acceptor in the catalytic mechanism. Arg154 provides a ligand contact to ADP. Substrate is bound by residues Arg162 and 169–171 (MGR). Residues 185–187 (GAD) and 213–215 (KDH) each bind ADP. Substrate is bound by residues Glu222, Arg243, and 249–252 (HMQR).

Belongs to the phosphofructokinase type A (PFKA) family. ATP-dependent PFK group I subfamily. Prokaryotic clade 'B1' sub-subfamily. In terms of assembly, homotetramer. Mg(2+) serves as cofactor.

The protein resides in the cytoplasm. The catalysed reaction is beta-D-fructose 6-phosphate + ATP = beta-D-fructose 1,6-bisphosphate + ADP + H(+). The protein operates within carbohydrate degradation; glycolysis; D-glyceraldehyde 3-phosphate and glycerone phosphate from D-glucose: step 3/4. With respect to regulation, allosterically activated by ADP and other diphosphonucleosides, and allosterically inhibited by phosphoenolpyruvate. The binding affinities for these effectors are decreased however, and therefore the allosteric effect becomes apparent only at high effector concentrations. Catalyzes the phosphorylation of D-fructose 6-phosphate to fructose 1,6-bisphosphate by ATP, the first committing step of glycolysis. The chain is ATP-dependent 6-phosphofructokinase from Lactobacillus delbrueckii subsp. bulgaricus.